The primary structure comprises 1896 residues: von Willebrand factor A domain-containing protein 8 (1896 aa).

The transit peptide at 1–18 (MHSRILFKGTAAAVAARR) directs the protein to the mitochondrion. 439 to 446 (GAKGCGKS) provides a ligand contact to ATP. Residues 1536 to 1564 (GLDVSSPKHGKIDAKNAPHVGGNQWAGGT) form a disordered region. The VWFA domain maps to 1705–1887 (RLRVLADVSG…KEIPQILQQI (183 aa)).

In terms of assembly, monomer.

The protein resides in the mitochondrion. Exhibits ATPase activity in vitro. This chain is von Willebrand factor A domain-containing protein 8 (vwa8), found in Danio rerio (Zebrafish).